Here is a 237-residue protein sequence, read N- to C-terminus: Ribosomal RNA small subunit methyltransferase G (237 aa).

S-adenosyl-L-methionine contacts are provided by residues glycine 79, 130–131, and arginine 147; that span reads CE.

The protein belongs to the methyltransferase superfamily. RNA methyltransferase RsmG family.

The protein resides in the cytoplasm. Functionally, specifically methylates the N7 position of a guanine in 16S rRNA. This chain is Ribosomal RNA small subunit methyltransferase G, found in Malacoplasma penetrans (strain HF-2) (Mycoplasma penetrans).